The primary structure comprises 204 residues: Copper-binding protein CutI (204 aa).

The first 26 residues, 1 to 26 (MLKKIALTLCPAIVGSLLFFTAPASA), serve as a signal peptide directing secretion. Cu(2+)-binding residues include histidine 27 and glutamate 50. The Extracellular segment spans residues 27–178 (HVSVKPAESA…DDSENSGSSA (152 aa)). The interval 146-176 (PHSITNITSAKQVTDEHGATKTEDDSENSGS) is disordered. Positions 147 to 157 (HSITNITSAKQ) are enriched in polar residues. Positions 158–168 (VTDEHGATKTE) are enriched in basic and acidic residues. A helical membrane pass occupies residues 179-199 (LDITAMVLSAAAIILSVAALV). Residues 200 to 204 (KKKRA) are Cytoplasmic-facing.

The protein resides in the cell membrane. Its function is as follows. Copper-binding protein that probably plays a role in copper homeostasis. May act as metallochaperone, possibly to facilitate copper uptake via the CutJ/YcnJ importer. Preferentially binds Cu in its oxidized Cu(II) state in a 1:1 stoichiometry. The polypeptide is Copper-binding protein CutI (Bacillus subtilis (strain 168)).